The chain runs to 78 residues: Acyl carrier protein (78 aa).

In terms of domain architecture, Carrier spans 2 to 77 (SDIAERVKKI…DAIKFLEKNA (76 aa)). Ser37 carries the post-translational modification O-(pantetheine 4'-phosphoryl)serine.

Belongs to the acyl carrier protein (ACP) family. 4'-phosphopantetheine is transferred from CoA to a specific serine of apo-ACP by AcpS. This modification is essential for activity because fatty acids are bound in thioester linkage to the sulfhydryl of the prosthetic group.

It is found in the cytoplasm. The protein operates within lipid metabolism; fatty acid biosynthesis. Its function is as follows. Carrier of the growing fatty acid chain in fatty acid biosynthesis. This is Acyl carrier protein from Azorhizobium caulinodans (strain ATCC 43989 / DSM 5975 / JCM 20966 / LMG 6465 / NBRC 14845 / NCIMB 13405 / ORS 571).